A 346-amino-acid polypeptide reads, in one-letter code: Histidinol-phosphate aminotransferase (346 aa).

An N6-(pyridoxal phosphate)lysine modification is found at Lys-209.

This sequence belongs to the class-II pyridoxal-phosphate-dependent aminotransferase family. Histidinol-phosphate aminotransferase subfamily. As to quaternary structure, homodimer. Pyridoxal 5'-phosphate serves as cofactor.

The enzyme catalyses L-histidinol phosphate + 2-oxoglutarate = 3-(imidazol-4-yl)-2-oxopropyl phosphate + L-glutamate. The protein operates within amino-acid biosynthesis; L-histidine biosynthesis; L-histidine from 5-phospho-alpha-D-ribose 1-diphosphate: step 7/9. The polypeptide is Histidinol-phosphate aminotransferase (Vibrio vulnificus (strain CMCP6)).